A 258-amino-acid chain; its full sequence is Probable enoyl-CoA hydratase (258 aa).

Belongs to the enoyl-CoA hydratase/isomerase family.

It carries out the reaction a (3S)-3-hydroxyacyl-CoA = a (2E)-enoyl-CoA + H2O. The enzyme catalyses a 4-saturated-(3S)-3-hydroxyacyl-CoA = a (3E)-enoyl-CoA + H2O. The protein operates within lipid metabolism; fatty acid beta-oxidation. Its function is as follows. Involved in the degradation of long-chain fatty acids. This is Probable enoyl-CoA hydratase (fadB) from Bacillus subtilis (strain 168).